A 628-amino-acid chain; its full sequence is tRNA uridine 5-carboxymethylaminomethyl modification enzyme MnmG (628 aa).

Residue glycine 13 to glycine 18 coordinates FAD. Glycine 281–phenylalanine 295 provides a ligand contact to NAD(+).

Belongs to the MnmG family. Homodimer. Heterotetramer of two MnmE and two MnmG subunits. It depends on FAD as a cofactor.

The protein resides in the cytoplasm. Its function is as follows. NAD-binding protein involved in the addition of a carboxymethylaminomethyl (cmnm) group at the wobble position (U34) of certain tRNAs, forming tRNA-cmnm(5)s(2)U34. In Treponema denticola (strain ATCC 35405 / DSM 14222 / CIP 103919 / JCM 8153 / KCTC 15104), this protein is tRNA uridine 5-carboxymethylaminomethyl modification enzyme MnmG.